Here is a 467-residue protein sequence, read N- to C-terminus: Argininosuccinate lyase (467 aa).

This sequence belongs to the lyase 1 family. Argininosuccinate lyase subfamily.

The protein localises to the cytoplasm. It carries out the reaction 2-(N(omega)-L-arginino)succinate = fumarate + L-arginine. It participates in amino-acid biosynthesis; L-arginine biosynthesis; L-arginine from L-ornithine and carbamoyl phosphate: step 3/3. This Rhizobium etli (strain CIAT 652) protein is Argininosuccinate lyase.